A 513-amino-acid polypeptide reads, in one-letter code: Aspartyl protease family protein 1 (513 aa).

The N-terminal stretch at 1 to 21 (MVWYSSCRILFLGLLILLASS) is a signal peptide. Positions 104-445 (HYANVTVGTP…DREKLILGWK (342 aa)) constitute a Peptidase A1 domain. Residues aspartate 122 and aspartate 327 contribute to the active site. The tract at residues 452-488 (GETSARTLPSNRSSSSARPPASSFDPEATNIPSQRPN) is disordered. A compositionally biased stretch (low complexity) spans 455–474 (SARTLPSNRSSSSARPPASS). A lipid anchor (GPI-anchor amidated serine) is attached at serine 484. Positions 485–513 (QRPNTSTTSAAYSLSISLSLFFFSILAIL) are cleaved as a propeptide — removed in mature form.

The protein belongs to the peptidase A1 family.

Its subcellular location is the cell membrane. Its function is as follows. Aspartyl protease. Not able to cleave BAG6. The sequence is that of Aspartyl protease family protein 1 from Arabidopsis thaliana (Mouse-ear cress).